The primary structure comprises 148 residues: Cyanate hydratase (148 aa).

Catalysis depends on residues R89, E92, and S115.

It belongs to the cyanase family.

It carries out the reaction cyanate + hydrogencarbonate + 3 H(+) = NH4(+) + 2 CO2. Functionally, catalyzes the reaction of cyanate with bicarbonate to produce ammonia and carbon dioxide. In Sulfurisphaera tokodaii (strain DSM 16993 / JCM 10545 / NBRC 100140 / 7) (Sulfolobus tokodaii), this protein is Cyanate hydratase.